Reading from the N-terminus, the 188-residue chain is Photosystem I assembly protein Ycf4 (188 aa).

A run of 2 helical transmembrane segments spans residues 26 to 46 and 68 to 88; these read YFWA…GLSS and LVMG…WFVI.

This sequence belongs to the Ycf4 family.

It localises to the cellular thylakoid membrane. In terms of biological role, seems to be required for the assembly of the photosystem I complex. In Synechococcus elongatus (strain ATCC 33912 / PCC 7942 / FACHB-805) (Anacystis nidulans R2), this protein is Photosystem I assembly protein Ycf4.